A 554-amino-acid polypeptide reads, in one-letter code: Apyrase (554 aa).

Positions 1 to 21 are cleaved as a signal peptide; the sequence is MFKITVFIYVLQLILPSKVHS. D43, H45, D92, N124, H224, and H248 together coordinate a divalent metal cation. 6 residues coordinate AMP: R358, N394, R399, F418, F504, and D510.

The protein belongs to the 5'-nucleotidase family. The cofactor is a divalent metal cation. Salivary gland (at protein level).

It localises to the secreted. It carries out the reaction a ribonucleoside 5'-triphosphate + 2 H2O = a ribonucleoside 5'-phosphate + 2 phosphate + 2 H(+). Functionally, facilitates hematophagy by inhibiting ADP-dependent platelet aggregation in the host. Cleaves adenosine triphosphate (ATP) and adenosine diphosphate (ADP) to adenosine monophosphate (AMP) and inorganic phosphate. Shows potential for antithrombotic activity. Can induce basophil activation. May reduce probing time by facilitating the speed of locating blood. This Tabanus yao (Horsefly) protein is Apyrase.